An 858-amino-acid chain; its full sequence is MMPGPRPRKGPQARGQGVAAAKQMGLFMEFGPEDMLLGMDEAEDDEDLEAELLALTGEAQTTGKKPAPKGQAPLPMAHIEKLAADCMRDVEEEEEEEGLEEDAELLTELQEVLGVDEETEPLDGDEVADPGGSEEENGLEDTEPPVQTAVLTASAPAAQAGASQGLHALLEERIHNYREAAASAKEAGEAAKARRCERGLKTLESQLASVRRGRKINEDEIPPPVALGKRPLAPQEPANRSPETDPPAPPALESDNPSQPETSLPGISAQPVSDLDPDPRALLSSRQREYKVAALSAKRAGELDRARELMRIGKRFGAVLEALEKGQPVDLSAMPPAPEDLKPQQASQAPTAPSVIPPAVERVQPVMAPDVPATPVAPTESQTVLDALQQRLNKYREAGIQARSGGDERKARMHERIAKQYQDAIRAHRAGRKVNFAELPVPPGFPPIPGLESTMGVEEDAVAATLAAAEKLASAEDSAPADKDEDEPPGHLQGEPPAQAPVAKKPARPTVPSSQRLPEPRASSSKESPSPSVREQLALLEARKLQYQRAALQAKRSQDLEQAKAYLRVAKWLEAQIIQARSGRPVDLSKVPSPLTDEEGDFILIHHEDLRLSQKAEEVYAQLQKMLLEQQEKCLLFSKQFMHQGNVAETTRFEKLAQDRKKQLEILQLAQAQGLDPPTHHFELKTFQTVRIFSELNSTEMHLIIVRGMNLPAPPGVTPDDLDAFVRFEFHYPNSDQAQKSKTAVVKNTNSPEFDQLFKLNINRNHRGFKRVIQSKGIKFEIFHKGSFFRSDKLVGTAHLKLERLENECEIREIVEVLDGRKPTGGKLEVKVRLREPLSGQDVQMVTENWLVLEPRGL.

Disordered stretches follow at residues 112–164 (VLGV…GASQ), 180–199 (AAAS…CERG), 204–284 (ESQL…ALLS), 329–352 (VDLS…APTA), and 470–533 (EKLA…SPSV). Residues 114-143 (GVDEETEPLDGDEVADPGGSEEENGLEDTE) show a composition bias toward acidic residues. Residues 153 to 164 (ASAPAAQAGASQ) show a composition bias toward low complexity. Positions 166–212 (LHALLEERIHNYREAAASAKEAGEAAKARRCERGLKTLESQLASVRR) form a coiled coil. A compositionally biased stretch (basic and acidic residues) spans 186-199 (EAGEAAKARRCERG). Ser-209 carries the post-translational modification Phosphoserine. The span at 520–532 (PRASSSKESPSPS) shows a compositional bias: low complexity. Ser-593 is subject to Phosphoserine. A Phosphothreonine modification is found at Thr-596. Residues 611 to 635 (RLSQKAEEVYAQLQKMLLEQQEKCL) are a coiled coil. Residues 676-815 (DPPTHHFELK…ENECEIREIV (140 aa)) enclose the C2 domain.

Belongs to the CC2D1 family. In terms of assembly, interacts with CHMP4B. In terms of tissue distribution, widely distributed in brain and peripheral tissues.

The protein resides in the nucleus. In terms of biological role, transcription factor that binds specifically to the DRE (dual repressor element) and represses HTR1A gene transcription in neuronal cells. The protein is Coiled-coil and C2 domain-containing protein 1B (CC2D1B) of Homo sapiens (Human).